We begin with the raw amino-acid sequence, 711 residues long: Polyribonucleotide nucleotidyltransferase (711 aa).

Mg(2+) is bound by residues aspartate 486 and aspartate 492. Residues 553–612 (PRIHTIKINPDKIKDVIGKGGSVIRALTEETGTTIEIEDDGTVKIAATDGEKAKHAIRRI) enclose the KH domain. The region spanning 622–690 (GRVYNGKVTR…RQGRIRLSIK (69 aa)) is the S1 motif domain. Residues 689–711 (IKEATEQSQPAAAPEAPAAEQGE) are disordered. Low complexity predominate over residues 694–711 (EQSQPAAAPEAPAAEQGE).

It belongs to the polyribonucleotide nucleotidyltransferase family. As to quaternary structure, component of the RNA degradosome, which is a multiprotein complex involved in RNA processing and mRNA degradation. Mg(2+) is required as a cofactor.

The protein localises to the cytoplasm. The enzyme catalyses RNA(n+1) + phosphate = RNA(n) + a ribonucleoside 5'-diphosphate. In terms of biological role, involved in mRNA degradation. Catalyzes the phosphorolysis of single-stranded polyribonucleotides processively in the 3'- to 5'-direction. The polypeptide is Polyribonucleotide nucleotidyltransferase (Escherichia coli O6:K15:H31 (strain 536 / UPEC)).